Consider the following 107-residue polypeptide: Nucleoid-associated protein HNE_0371 (107 aa).

Belongs to the YbaB/EbfC family. Homodimer.

It localises to the cytoplasm. Its subcellular location is the nucleoid. In terms of biological role, binds to DNA and alters its conformation. May be involved in regulation of gene expression, nucleoid organization and DNA protection. The chain is Nucleoid-associated protein HNE_0371 from Hyphomonas neptunium (strain ATCC 15444).